Reading from the N-terminus, the 308-residue chain is Atrochrysone carboxyl ACP thioesterase (308 aa).

Zn(2+)-binding residues include His-99, His-101, Asp-103, and His-104. The active-site Proton donor/acceptor is the Asp-103.

Belongs to the metallo-beta-lactamase superfamily. Zn(2+) serves as cofactor.

The enzyme catalyses atrochrysone carboxyl-[ACP] + H2O = atrochrysone carboxylate + holo-[ACP] + H(+). It functions in the pathway secondary metabolite biosynthesis. Functionally, atrochrysone carboxyl ACP thioesterase; part of the gene cluster that mediates the biosynthesis of physcion, a natural anthraquinone fungicide that can prevent plant fungal infections. The pathway begins with the polyketide synthase AcPKS that condenses 8 malonyl-CoA units to synthesize atrochrysone thioester which is released from the synthase by the atrochrysone carboxyl ACP thioesterase AcTE that breaks the thioester bond and leads to free atrochrysone carboxylic acid. Spontaneous decarboxylation of atrochrysone carboxylic acid leads to the formation of atrochrysone. Then, atrochrysone undergoes spontaneous dehydration and oxidation, giving the products emodin anthrone and emodin. The O-methyltransferase AcOMT then methylates the C-6 hydroxyl of emodin to form physcion. This chain is Atrochrysone carboxyl ACP thioesterase, found in Aspergillus chevalieri (Eurotium chevalieri).